The primary structure comprises 369 residues: Maltose/maltodextrin import ATP-binding protein MalK (369 aa).

An ABC transporter domain is found at 4-234; that stretch reads VTLRNVCKAY…PQNRFVAGFI (231 aa). Residue 36 to 43 participates in ATP binding; it reads GPSGCGKS.

Belongs to the ABC transporter superfamily. Maltooligosaccharide importer (TC 3.A.1.1.1) family. As to quaternary structure, the complex is composed of two ATP-binding proteins (MalK), two transmembrane proteins (MalG and MalK) and a solute-binding protein (MalE).

It is found in the cell inner membrane. It carries out the reaction D-maltose(out) + ATP + H2O = D-maltose(in) + ADP + phosphate + H(+). Its function is as follows. Part of the ABC transporter complex MalEFGK involved in maltose/maltodextrin import. Responsible for energy coupling to the transport system. This is Maltose/maltodextrin import ATP-binding protein MalK from Photobacterium profundum (strain SS9).